Consider the following 429-residue polypeptide: Threonine synthase (429 aa).

Lys-108 is subject to N6-(pyridoxal phosphate)lysine.

This sequence belongs to the threonine synthase family. Pyridoxal 5'-phosphate serves as cofactor.

The enzyme catalyses O-phospho-L-homoserine + H2O = L-threonine + phosphate. The protein operates within amino-acid biosynthesis; L-threonine biosynthesis; L-threonine from L-aspartate: step 5/5. Catalyzes the gamma-elimination of phosphate from L-phosphohomoserine and the beta-addition of water to produce L-threonine. This Buchnera aphidicola subsp. Schizaphis graminum (strain Sg) protein is Threonine synthase (thrC).